A 137-amino-acid chain; its full sequence is Methylglyoxal synthase (137 aa).

In terms of domain architecture, MGS-like spans 1–137 (MNIALVAHDQ…EVRKSKSQRI (137 aa)). Substrate contacts are provided by residues His8, Lys12, 34 to 37 (TGTT), and 54 to 55 (SG). Residue Asp60 is the Proton donor/acceptor of the active site. His87 is a substrate binding site.

The protein belongs to the methylglyoxal synthase family.

It carries out the reaction dihydroxyacetone phosphate = methylglyoxal + phosphate. Its function is as follows. Catalyzes the formation of methylglyoxal from dihydroxyacetone phosphate. The sequence is that of Methylglyoxal synthase from Clostridioides difficile (strain 630) (Peptoclostridium difficile).